We begin with the raw amino-acid sequence, 812 residues long: Lon protease (812 aa).

One can recognise a Lon N-terminal domain in the interval 22–215 (YAVLPLRDIV…KALSFMEAEI (194 aa)). 367–374 (GPPGVGKT) contacts ATP. In terms of domain architecture, Lon proteolytic spans 602–783 (EDQVGVVTGL…GEVLKHTLVR (182 aa)). Catalysis depends on residues S689 and K732. Residues 787-812 (PIEWTEQENPTAVPPVEDEAGASLAH) are disordered.

This sequence belongs to the peptidase S16 family. Homohexamer. Organized in a ring with a central cavity.

It is found in the cytoplasm. It catalyses the reaction Hydrolysis of proteins in presence of ATP.. Its function is as follows. ATP-dependent serine protease that mediates the selective degradation of mutant and abnormal proteins as well as certain short-lived regulatory proteins. Required for cellular homeostasis and for survival from DNA damage and developmental changes induced by stress. Degrades polypeptides processively to yield small peptide fragments that are 5 to 10 amino acids long. Binds to DNA in a double-stranded, site-specific manner. The polypeptide is Lon protease (Brucella suis biovar 1 (strain 1330)).